The chain runs to 485 residues: Glutamyl-tRNA(Gln) amidotransferase subunit A (485 aa).

Residues K79 and S154 each act as charge relay system in the active site. S178 acts as the Acyl-ester intermediate in catalysis.

The protein belongs to the amidase family. GatA subfamily. In terms of assembly, heterotrimer of A, B and C subunits.

It carries out the reaction L-glutamyl-tRNA(Gln) + L-glutamine + ATP + H2O = L-glutaminyl-tRNA(Gln) + L-glutamate + ADP + phosphate + H(+). Its function is as follows. Allows the formation of correctly charged Gln-tRNA(Gln) through the transamidation of misacylated Glu-tRNA(Gln) in organisms which lack glutaminyl-tRNA synthetase. The reaction takes place in the presence of glutamine and ATP through an activated gamma-phospho-Glu-tRNA(Gln). The sequence is that of Glutamyl-tRNA(Gln) amidotransferase subunit A from Staphylococcus carnosus (strain TM300).